The chain runs to 123 residues: MPTIQQLIRNKRQAAENKTKSPALQRSPQRRGVCTRVYTTTPKKPNSALRKVARVRLTSGFEVTAYIPGIGHNLQEHSVVLVRGGRVKDLPGVRYHIVRGTLDVVGVKDRRKGRSKYGVKRPK.

Residues 9-31 (RNKRQAAENKTKSPALQRSPQRR) form a disordered region.

It belongs to the universal ribosomal protein uS12 family. In terms of assembly, part of the 30S ribosomal subunit.

The protein localises to the plastid. It is found in the chloroplast. In terms of biological role, with S4 and S5 plays an important role in translational accuracy. Located at the interface of the 30S and 50S subunits. The chain is Small ribosomal subunit protein uS12c (rps12) from Spirogyra maxima (Green alga).